Reading from the N-terminus, the 198-residue chain is MQYPEPIAKLIEGFMRLPGIGPKTASRLAFFVLEMKEDDVLDFAKALVNVKRKLTYCSVCHNITDTDPCRICEDSKRDESVICVVQDAKDVIAMEKMKEYHGKYHVLHGAISPMDGIGPEDIKIPELIKRLQDDTIQEVIVATNPTIEGEATAMYISRLVKPTGIKVTRIAHGLPVGGDLEYADEVTLSKAMEGRREL.

The C4-type zinc finger occupies 57–72 (CSVCHNITDTDPCRIC). Residues 80-175 (SVICVVQDAK…KVTRIAHGLP (96 aa)) enclose the Toprim domain.

Belongs to the RecR family.

Functionally, may play a role in DNA repair. It seems to be involved in an RecBC-independent recombinational process of DNA repair. It may act with RecF and RecO. The protein is Recombination protein RecR of Halalkalibacterium halodurans (strain ATCC BAA-125 / DSM 18197 / FERM 7344 / JCM 9153 / C-125) (Bacillus halodurans).